Here is a 414-residue protein sequence, read N- to C-terminus: Glutamyl-tRNA reductase (414 aa).

Substrate is bound by residues 49-52, serine 108, 113-115, and glutamine 119; these read TCNR and EPQ. Cysteine 50 functions as the Nucleophile in the catalytic mechanism. Residue 188 to 193 participates in NADP(+) binding; it reads GAGQTG.

This sequence belongs to the glutamyl-tRNA reductase family. In terms of assembly, homodimer.

The catalysed reaction is (S)-4-amino-5-oxopentanoate + tRNA(Glu) + NADP(+) = L-glutamyl-tRNA(Glu) + NADPH + H(+). It participates in porphyrin-containing compound metabolism; protoporphyrin-IX biosynthesis; 5-aminolevulinate from L-glutamyl-tRNA(Glu): step 1/2. Functionally, catalyzes the NADPH-dependent reduction of glutamyl-tRNA(Glu) to glutamate 1-semialdehyde (GSA). The sequence is that of Glutamyl-tRNA reductase from Francisella tularensis subsp. holarctica (strain FTNF002-00 / FTA).